We begin with the raw amino-acid sequence, 220 residues long: ATP synthase subunit delta (220 aa).

It belongs to the ATPase delta chain family. F-type ATPases have 2 components, F(1) - the catalytic core - and F(0) - the membrane proton channel. F(1) has five subunits: alpha(3), beta(3), gamma(1), delta(1), epsilon(1). F(0) has three main subunits: a(1), b(2) and c(10-14). The alpha and beta chains form an alternating ring which encloses part of the gamma chain. F(1) is attached to F(0) by a central stalk formed by the gamma and epsilon chains, while a peripheral stalk is formed by the delta and b chains.

Its subcellular location is the cell inner membrane. Functionally, f(1)F(0) ATP synthase produces ATP from ADP in the presence of a proton or sodium gradient. F-type ATPases consist of two structural domains, F(1) containing the extramembraneous catalytic core and F(0) containing the membrane proton channel, linked together by a central stalk and a peripheral stalk. During catalysis, ATP synthesis in the catalytic domain of F(1) is coupled via a rotary mechanism of the central stalk subunits to proton translocation. Its function is as follows. This protein is part of the stalk that links CF(0) to CF(1). It either transmits conformational changes from CF(0) to CF(1) or is implicated in proton conduction. This is ATP synthase subunit delta from Gluconobacter oxydans (strain 621H) (Gluconobacter suboxydans).